A 141-amino-acid polypeptide reads, in one-letter code: Nucleoside diphosphate kinase (141 aa).

6 residues coordinate ATP: lysine 11, tyrosine 59, arginine 87, threonine 93, arginine 104, and asparagine 114. Histidine 117 serves as the catalytic Pros-phosphohistidine intermediate.

Belongs to the NDK family. Homotetramer. Mg(2+) serves as cofactor.

The protein resides in the cytoplasm. The catalysed reaction is a 2'-deoxyribonucleoside 5'-diphosphate + ATP = a 2'-deoxyribonucleoside 5'-triphosphate + ADP. It catalyses the reaction a ribonucleoside 5'-diphosphate + ATP = a ribonucleoside 5'-triphosphate + ADP. Major role in the synthesis of nucleoside triphosphates other than ATP. The ATP gamma phosphate is transferred to the NDP beta phosphate via a ping-pong mechanism, using a phosphorylated active-site intermediate. This Orientia tsutsugamushi (strain Boryong) (Rickettsia tsutsugamushi) protein is Nucleoside diphosphate kinase.